A 557-amino-acid chain; its full sequence is Alpha-glucosidase (557 aa).

Residue Asp-201 is the Nucleophile of the active site. The active-site Proton donor is the Glu-256.

It belongs to the glycosyl hydrolase 13 family.

It carries out the reaction Hydrolysis of terminal, non-reducing (1-&gt;4)-linked alpha-D-glucose residues with release of alpha-D-glucose.. The chain is Alpha-glucosidase (agl) from Pediococcus pentosaceus.